A 90-amino-acid chain; its full sequence is MSSGGLLLLLALLTLWAELTPISGHDRPTFCNLAPESGRCRGHLRRIYYNPDSNKCEVFFYGGCGGNDNNFETRKKCRQTCGAPRKGRPT.

The signal sequence occupies residues 1 to 24 (MSSGGLLLLLALLTLWAELTPISG). The BPTI/Kunitz inhibitor domain occupies 31–81 (CNLAPESGRCRGHLRRIYYNPDSNKCEVFFYGGCGGNDNNFETRKKCRQTC). 3 disulfides stabilise this stretch: C31-C81, C40-C64, and C56-C77. Residues 85–90 (RKGRPT) constitute a propeptide that is removed on maturation.

It belongs to the venom Kunitz-type family. As to expression, expressed by the venom gland.

The protein localises to the secreted. In terms of biological role, serine protease inhibitor that inhibits trypsin. The polypeptide is Kunitz-type serine protease inhibitor C5 (Daboia siamensis (Eastern Russel's viper)).